The primary structure comprises 439 residues: Serine--tRNA ligase (439 aa).

Residue 242–244 (TAE) participates in L-serine binding. 273 to 275 (RQE) serves as a coordination point for ATP. E296 is a binding site for L-serine. 360–363 (EISS) contributes to the ATP binding site. S396 contributes to the L-serine binding site.

It belongs to the class-II aminoacyl-tRNA synthetase family. Type-1 seryl-tRNA synthetase subfamily. Homodimer. The tRNA molecule binds across the dimer.

The protein resides in the cytoplasm. The enzyme catalyses tRNA(Ser) + L-serine + ATP = L-seryl-tRNA(Ser) + AMP + diphosphate + H(+). It carries out the reaction tRNA(Sec) + L-serine + ATP = L-seryl-tRNA(Sec) + AMP + diphosphate + H(+). The protein operates within aminoacyl-tRNA biosynthesis; selenocysteinyl-tRNA(Sec) biosynthesis; L-seryl-tRNA(Sec) from L-serine and tRNA(Sec): step 1/1. Functionally, catalyzes the attachment of serine to tRNA(Ser). Is also able to aminoacylate tRNA(Sec) with serine, to form the misacylated tRNA L-seryl-tRNA(Sec), which will be further converted into selenocysteinyl-tRNA(Sec). This chain is Serine--tRNA ligase, found in Oenococcus oeni (strain ATCC BAA-331 / PSU-1).